The primary structure comprises 482 residues: Glycogen synthase (482 aa).

K15 contributes to the ADP-alpha-D-glucose binding site.

It belongs to the glycosyltransferase 1 family. Bacterial/plant glycogen synthase subfamily.

It catalyses the reaction [(1-&gt;4)-alpha-D-glucosyl](n) + ADP-alpha-D-glucose = [(1-&gt;4)-alpha-D-glucosyl](n+1) + ADP + H(+). The protein operates within glycan biosynthesis; glycogen biosynthesis. Its function is as follows. Synthesizes alpha-1,4-glucan chains using ADP-glucose. The protein is Glycogen synthase of Hydrogenobaculum sp. (strain Y04AAS1).